A 519-amino-acid polypeptide reads, in one-letter code: Cytosol aminopeptidase (519 aa).

Phosphoserine is present on S42. The residue at position 45 (K45) is an N6-succinyllysine. S54 bears the Phosphoserine mark. N6-succinyllysine is present on residues K61 and K103. Residues S180 and S194 each carry the phosphoserine modification. Residues L202, M203, and T205 each contribute to the Zn(2+) site. At S238 the chain carries Phosphoserine. The Zn(2+) site is built by K282 and D287. K282, D287, S292, and K294 together coordinate substrate. D287 serves as a coordination point for Mg(2+). Residue K294 is part of the active site. Zn(2+) is bound by residues R303, D305, D364, and E366. Residues D305 and D364 each contribute to the substrate site. Positions 364 and 366 each coordinate Mg(2+). R368 is an active-site residue. Position 455 is an N6-acetyllysine; alternate (K455). At K455 the chain carries N6-succinyllysine; alternate. K476 is modified (N6-succinyllysine). K489 is modified (N6-acetyllysine; alternate). At K489 the chain carries N6-succinyllysine; alternate.

It belongs to the peptidase M17 family. As to quaternary structure, homohexamer. Zn(2+) serves as cofactor. The cofactor is Mn(2+).

It is found in the cytoplasm. It catalyses the reaction Release of an N-terminal amino acid, Xaa-|-Yaa-, in which Xaa is preferably Leu, but may be other amino acids including Pro although not Arg or Lys, and Yaa may be Pro. Amino acid amides and methyl esters are also readily hydrolyzed, but rates on arylamides are exceedingly low.. The enzyme catalyses an S-substituted L-cysteinylglycine + H2O = an S-substituted L-cysteine + glycine. It carries out the reaction L-cysteinylglycine + H2O = L-cysteine + glycine. The catalysed reaction is S-benzyl-L-cysteinylglycine + H2O = S-benzyl-L-cysteine + glycine. It catalyses the reaction Release of N-terminal proline from a peptide.. With respect to regulation, zofenoprilat inhibits Cys-Gly hydrolysis activity. Its function is as follows. Cytosolic metallopeptidase that catalyzes the removal of unsubstituted N-terminal hydrophobic amino acids from various peptides. The presence of Zn(2+) ions is essential for the peptidase activity, and the association with other cofactors can modulate the substrate spectificity of the enzyme. For instance, in the presence of Mn(2+), it displays a specific Cys-Gly hydrolyzing activity of Cys-Gly-S-conjugates. Involved in the metabolism of glutathione and in the degradation of glutathione S-conjugates, which may play a role in the control of the cell redox status. The polypeptide is Cytosol aminopeptidase (Bos taurus (Bovine)).